The sequence spans 509 residues: MYPNSPSLGRIPLPLPCEQQQQASGYSDKLPVSAAPELLSPEQFIQASLNIQKHANLSRMLMNGNVLTVPPVSSPPWAYLNHSPLISPGSPSSSFQNRKRRSDEGNVSYDVKRQRFHSPQEQTVNHQAVPLRGDLRCSYPGSPAFPLLQSPSPPVLKEHVSNSGDCWLYDHIDTTLPVAEDKLSQQILDLFQALQQQVCDIKKKDICRAELQREIQQIFPQSRLYLVGSSLNGFGTRISDADLCLVLKEEPMNQHTEATQILGLLHKLFYTRLSYIERLQFIRAKVPIVKFRDKVSGAEFDLNVNNVVGIRNTFLLRTYAYLESRVRPLVLVIKKWANHHGINDASRGTLSSYTLVLMVLHYLQTLPEPILPSLQKKYPECFDLSMQLNLVHHAPRNIPPYLSKNETPLGDLLLGFLKYFAVEFDWSKDIISVREGKALPRSDDYLWRNKYICVEEPFDGTNTARAVYERQKFDMIRAEFLKAWGALRDDRDLYSLLPVTAIVKKMNSL.

Residues 88-107 form a disordered region; it reads PGSPSSSFQNRKRRSDEGNV. Mg(2+) contacts are provided by Asp240 and Asp242. The PAP-associated domain maps to 409 to 462; that stretch reads LGDLLLGFLKYFAVEFDWSKDIISVREGKALPRSDDYLWRNKYICVEEPFDGTN.

It belongs to the DNA polymerase type-B-like family. GLD2 subfamily. Component of a complex at least composed of cpeb1, cpsf1, tent2/gld2, pabpc1/ePAB, parn and sympk. Following oocyte maturation, parn is expelled from the complex. Interacts with rbfox2 and sympk. Requires Mg(2+) as cofactor. The cofactor is Mn(2+).

Its subcellular location is the cytoplasm. The catalysed reaction is RNA(n) + ATP = RNA(n)-3'-adenine ribonucleotide + diphosphate. In terms of biological role, cytoplasmic poly(A) RNA polymerase that adds successive AMP monomers to the 3'-end of specific RNAs, forming a poly(A) tail. In contrast to the canonical nuclear poly(A) RNA polymerase, it only adds poly(A) to selected cytoplasmic mRNAs during oocyte maturation. Plays a central role during oocyte maturation by mediating polyadenylation of dormant mRNAs, which contain 5'AAUAAA-3' sequence in their 3'UTR. In immature oocytes, polyadenylation of poly(A) tails is counteracted by the ribonuclease parn. During maturation parn is excluded from the ribonucleoprotein complex, allowing poly(A) elongation and activation of mRNAs. May not play a role in replication-dependent histone mRNA degradation. This chain is Poly(A) RNA polymerase GLD2-A (tent2-a), found in Xenopus laevis (African clawed frog).